A 428-amino-acid polypeptide reads, in one-letter code: Protein ECERIFERUM 26 (428 aa).

Residues 1–36 are disordered; sequence MGRSQEQGQGQGPVHSIRLSTVGATRPTETGTTHEP. The segment covering 21 to 36 has biased composition (low complexity); it reads TVGATRPTETGTTHEP.

This sequence belongs to the plant acyltransferase family. As to expression, highly expressed in leaves.

It localises to the cytoplasm. The protein resides in the cytosol. Involved in biosynthesis of the epicuticular wax. Plays a role in very-long-chain fatty acid (VLCFA) biosynthesis and is required for C30 fatty acid elongation in leaf. Despite its classification as a BAHD acyltransferase based on sequence homology, CER26 does not seem to share the catalytic mechanism of the members of the BAHD family. The chain is Protein ECERIFERUM 26 (CER26) from Arabidopsis thaliana (Mouse-ear cress).